Here is a 456-residue protein sequence, read N- to C-terminus: Protein odr-4 homolog (456 aa).

Low complexity predominate over residues 374 to 401 (IESSKNNNNNNNNNNNNNNNNNNNNSKL). Residues 374–403 (IESSKNNNNNNNNNNNNNNNNNNNNSKLSN) are disordered. A helical transmembrane segment spans residues 436–456 (YLIIIISVLVLMVAFYFKFFV).

The protein belongs to the ODR-4 family.

Its subcellular location is the membrane. Its function is as follows. May play a role in the trafficking of a subset of G-protein coupled receptors. The polypeptide is Protein odr-4 homolog (Dictyostelium discoideum (Social amoeba)).